A 513-amino-acid polypeptide reads, in one-letter code: Calcium-dependent protein kinase 24 (513 aa).

A disordered region spans residues 1–33; the sequence is MQPDPSGSGGDGNANAKAKLAPPPVTAAGGRPV. A Protein kinase domain is found at 47-305; that stretch reads YRIGKKLGQG…AHEVLCHPWI (259 aa). Residues 53-61 and Lys-76 contribute to the ATP site; that span reads LGQGQFGTT. The active-site Proton acceptor is Asp-171. Residues 311–341 form an autoinhibitory domain region; that stretch reads APDKPIDSAVLSRLKHFSAMNKLKKMALRVI. EF-hand domains lie at 348 to 383, 384 to 419, 420 to 455, and 458 to 489; these read EEIG…VGSE, LTEH…MNKL, EREE…FGLD, and HLED…GNAG. Residues Asp-361, Asp-363, Ser-365, Thr-367, Glu-372, Asp-397, Asp-399, Ser-401, Thr-403, Glu-408, Asp-433, Asp-435, Ser-437, Glu-444, Asp-467, Asn-469, Asp-471, Gln-473, and Glu-478 each contribute to the Ca(2+) site.

This sequence belongs to the protein kinase superfamily. Ser/Thr protein kinase family. CDPK subfamily. As to expression, expressed in roots.

It is found in the cytoplasm. The catalysed reaction is L-seryl-[protein] + ATP = O-phospho-L-seryl-[protein] + ADP + H(+). The enzyme catalyses L-threonyl-[protein] + ATP = O-phospho-L-threonyl-[protein] + ADP + H(+). Its activity is regulated as follows. Activated by calcium. Autophosphorylation may play an important role in the regulation of the kinase activity. Its function is as follows. May play a role in signal transduction pathways that involve calcium as a second messenger. Possesses calcium-dependent protein kinase activity in vitro. The polypeptide is Calcium-dependent protein kinase 24 (Oryza sativa subsp. japonica (Rice)).